A 281-amino-acid chain; its full sequence is Pantothenate synthetase (281 aa).

30-37 (MGALHAGH) provides a ligand contact to ATP. Residue histidine 37 is the Proton donor of the active site. A (R)-pantoate-binding site is contributed by glutamine 64. Residue glutamine 64 coordinates beta-alanine. 150 to 153 (GKKD) serves as a coordination point for ATP. (R)-pantoate is bound at residue glutamine 156. ATP-binding positions include valine 179 and 187 to 190 (YSSR).

It belongs to the pantothenate synthetase family. As to quaternary structure, homodimer.

Its subcellular location is the cytoplasm. The enzyme catalyses (R)-pantoate + beta-alanine + ATP = (R)-pantothenate + AMP + diphosphate + H(+). It participates in cofactor biosynthesis; (R)-pantothenate biosynthesis; (R)-pantothenate from (R)-pantoate and beta-alanine: step 1/1. Catalyzes the condensation of pantoate with beta-alanine in an ATP-dependent reaction via a pantoyl-adenylate intermediate. The chain is Pantothenate synthetase from Akkermansia muciniphila (strain ATCC BAA-835 / DSM 22959 / JCM 33894 / BCRC 81048 / CCUG 64013 / CIP 107961 / Muc).